A 149-amino-acid polypeptide reads, in one-letter code: Calmodulin-1 (149 aa).

Alanine 2 carries the post-translational modification N-acetylalanine. EF-hand domains lie at 8 to 43, 44 to 79, 81 to 116, and 117 to 149; these read DQIAEFKEAFSLFDKDGDGCITTKELGTVMRSLGQN, PTEAELQDMINEVDADGNGTIDFPEFLNLMARKMKD, DSEEELKEAFRVFDKDQNGFISAAELRHVMTNLGEK, and LTDEEVDEMIREADVDGDGQINYEEFVKVMMAK. Residues aspartate 21, aspartate 23, aspartate 25, cysteine 27, glutamate 32, aspartate 57, aspartate 59, asparagine 61, threonine 63, glutamate 68, aspartate 94, aspartate 96, asparagine 98, and glutamate 105 each contribute to the Ca(2+) site. Lysine 116 is modified (N6,N6,N6-trimethyllysine). Aspartate 130, aspartate 132, aspartate 134, glutamine 136, and glutamate 141 together coordinate Ca(2+).

It belongs to the calmodulin family.

Calmodulin mediates the control of a large number of enzymes, ion channels and other proteins by Ca(2+). Among the enzymes to be stimulated by the calmodulin-Ca(2+) complex are a number of protein kinases and phosphatases. This chain is Calmodulin-1 (CAM1-1), found in Oryza sativa subsp. indica (Rice).